A 304-amino-acid polypeptide reads, in one-letter code: Acetylglutamate kinase (304 aa).

Residues 64-65, Arg86, and Asn181 contribute to the substrate site; that span reads GG.

It belongs to the acetylglutamate kinase family. ArgB subfamily.

The protein localises to the plastid. The protein resides in the chloroplast. It catalyses the reaction N-acetyl-L-glutamate + ATP = N-acetyl-L-glutamyl 5-phosphate + ADP. Its pathway is amino-acid biosynthesis; L-arginine biosynthesis; N(2)-acetyl-L-ornithine from L-glutamate: step 2/4. Catalyzes the ATP-dependent phosphorylation of N-acetyl-L-glutamate. The chain is Acetylglutamate kinase from Cyanidium caldarium (Red alga).